The following is a 202-amino-acid chain: Recombination protein RecR (202 aa).

Residues 59–74 (CSVCFHLSAEPVCEIC) form a C4-type zinc finger. Residues 82–176 (HTICVVADSR…KVTRIAFGLP (95 aa)) enclose the Toprim domain.

This sequence belongs to the RecR family.

Its function is as follows. May play a role in DNA repair. It seems to be involved in an RecBC-independent recombinational process of DNA repair. It may act with RecF and RecO. This is Recombination protein RecR from Thermosynechococcus vestitus (strain NIES-2133 / IAM M-273 / BP-1).